The sequence spans 466 residues: NADH-quinone oxidoreductase subunit N (466 aa).

Helical transmembrane passes span 9–29, 33–53, 68–88, 100–120, 122–142, 157–177, 190–210, 232–252, 263–283, 289–309, 314–334, 359–379, 394–416, and 438–458; these read LIPL…GAIV, CGTV…MLAP, PFTR…LLLA, EEYP…ASAA, FLTL…LVAY, LLMG…LYGA, SAAG…GLAF, VVAF…LLIL, APLW…ALLQ, MLAY…LSGG, AAAF…GALA, GVVL…VGFV, APLA…RVVV, and LSLG…GPLF.

This sequence belongs to the complex I subunit 2 family. As to quaternary structure, NDH-1 is composed of 14 different subunits. Subunits NuoA, H, J, K, L, M, N constitute the membrane sector of the complex.

It is found in the cell inner membrane. The catalysed reaction is a quinone + NADH + 5 H(+)(in) = a quinol + NAD(+) + 4 H(+)(out). In terms of biological role, NDH-1 shuttles electrons from NADH, via FMN and iron-sulfur (Fe-S) centers, to quinones in the respiratory chain. The immediate electron acceptor for the enzyme in this species is believed to be ubiquinone. Couples the redox reaction to proton translocation (for every two electrons transferred, four hydrogen ions are translocated across the cytoplasmic membrane), and thus conserves the redox energy in a proton gradient. The sequence is that of NADH-quinone oxidoreductase subunit N from Geobacter metallireducens (strain ATCC 53774 / DSM 7210 / GS-15).